The sequence spans 444 residues: Glutamate--tRNA ligase 1 (444 aa).

Residues 8-18 carry the 'HIGH' region motif; that stretch reads PSPTGFLHVGN. The 'KMSKS' region signature appears at 239–243; that stretch reads KISKR. Lys242 serves as a coordination point for ATP.

It belongs to the class-I aminoacyl-tRNA synthetase family. Glutamate--tRNA ligase type 1 subfamily. In terms of assembly, monomer.

It localises to the cytoplasm. It catalyses the reaction tRNA(Glu) + L-glutamate + ATP = L-glutamyl-tRNA(Glu) + AMP + diphosphate. Its function is as follows. Catalyzes the attachment of glutamate to tRNA(Glu) in a two-step reaction: glutamate is first activated by ATP to form Glu-AMP and then transferred to the acceptor end of tRNA(Glu). The sequence is that of Glutamate--tRNA ligase 1 from Zymomonas mobilis subsp. mobilis (strain ATCC 31821 / ZM4 / CP4).